The primary structure comprises 486 residues: Ribulose bisphosphate carboxylase large chain (486 aa).

Substrate-binding residues include asparagine 126 and threonine 176. Lysine 178 functions as the Proton acceptor in the catalytic mechanism. Lysine 180 lines the substrate pocket. The Mg(2+) site is built by lysine 204, aspartate 206, and glutamate 207. Residue lysine 204 is modified to N6-carboxylysine. The active-site Proton acceptor is histidine 296. Substrate-binding residues include arginine 297, histidine 329, and serine 381.

Belongs to the RuBisCO large chain family. Type I subfamily. Heterohexadecamer of 8 large chains and 8 small chains. It depends on Mg(2+) as a cofactor.

It catalyses the reaction 2 (2R)-3-phosphoglycerate + 2 H(+) = D-ribulose 1,5-bisphosphate + CO2 + H2O. The catalysed reaction is D-ribulose 1,5-bisphosphate + O2 = 2-phosphoglycolate + (2R)-3-phosphoglycerate + 2 H(+). Its function is as follows. RuBisCO catalyzes two reactions: the carboxylation of D-ribulose 1,5-bisphosphate, the primary event in carbon dioxide fixation, as well as the oxidative fragmentation of the pentose substrate. Both reactions occur simultaneously and in competition at the same active site. The sequence is that of Ribulose bisphosphate carboxylase large chain from Cupriavidus taiwanensis (strain DSM 17343 / BCRC 17206 / CCUG 44338 / CIP 107171 / LMG 19424 / R1) (Ralstonia taiwanensis (strain LMG 19424)).